A 78-amino-acid polypeptide reads, in one-letter code: Large ribosomal subunit protein bL28 (78 aa).

The protein belongs to the bacterial ribosomal protein bL28 family.

The chain is Large ribosomal subunit protein bL28 from Trichormus variabilis (strain ATCC 29413 / PCC 7937) (Anabaena variabilis).